The primary structure comprises 284 residues: Bifunctional protein FolD (284 aa).

NADP(+) contacts are provided by residues 166-168 and Ile232; that span reads GAS.

This sequence belongs to the tetrahydrofolate dehydrogenase/cyclohydrolase family. As to quaternary structure, homodimer.

It carries out the reaction (6R)-5,10-methylene-5,6,7,8-tetrahydrofolate + NADP(+) = (6R)-5,10-methenyltetrahydrofolate + NADPH. It catalyses the reaction (6R)-5,10-methenyltetrahydrofolate + H2O = (6R)-10-formyltetrahydrofolate + H(+). It participates in one-carbon metabolism; tetrahydrofolate interconversion. Its function is as follows. Catalyzes the oxidation of 5,10-methylenetetrahydrofolate to 5,10-methenyltetrahydrofolate and then the hydrolysis of 5,10-methenyltetrahydrofolate to 10-formyltetrahydrofolate. The polypeptide is Bifunctional protein FolD (Alteromonas mediterranea (strain DSM 17117 / CIP 110805 / LMG 28347 / Deep ecotype)).